We begin with the raw amino-acid sequence, 504 residues long: uncharacterized protein (504 aa).

The chain crosses the membrane as a helical span at residues asparagine 6–phenylalanine 26.

It to M.jannaschii MJ1506 and MJ1561.

It localises to the membrane. This is an uncharacterized protein from Methanocaldococcus jannaschii (strain ATCC 43067 / DSM 2661 / JAL-1 / JCM 10045 / NBRC 100440) (Methanococcus jannaschii).